We begin with the raw amino-acid sequence, 262 residues long: Putative hydro-lyase Sca_2211 (262 aa).

It belongs to the D-glutamate cyclase family.

This Staphylococcus carnosus (strain TM300) protein is Putative hydro-lyase Sca_2211.